Consider the following 208-residue polypeptide: Holliday junction branch migration complex subunit RuvA (208 aa).

The interval 1–67 is domain I; the sequence is MIGWLHGTIG…EDGQQLYGFE (67 aa). The interval 68 to 146 is domain II; it reads TKADRNLFRL…ERWQQQGGST (79 aa). Residues 147–157 form a flexible linker region; that stretch reads PLRLVEPVAES. Residues 157 to 208 are domain III; the sequence is SRELRATLEALGYGPEEVSAAVAQAGSQGLDPEQPMEEWLRHCLAWLSRQAG.

This sequence belongs to the RuvA family. As to quaternary structure, homotetramer. Forms an RuvA(8)-RuvB(12)-Holliday junction (HJ) complex. HJ DNA is sandwiched between 2 RuvA tetramers; dsDNA enters through RuvA and exits via RuvB. An RuvB hexamer assembles on each DNA strand where it exits the tetramer. Each RuvB hexamer is contacted by two RuvA subunits (via domain III) on 2 adjacent RuvB subunits; this complex drives branch migration. In the full resolvosome a probable DNA-RuvA(4)-RuvB(12)-RuvC(2) complex forms which resolves the HJ.

It is found in the cytoplasm. The RuvA-RuvB-RuvC complex processes Holliday junction (HJ) DNA during genetic recombination and DNA repair, while the RuvA-RuvB complex plays an important role in the rescue of blocked DNA replication forks via replication fork reversal (RFR). RuvA specifically binds to HJ cruciform DNA, conferring on it an open structure. The RuvB hexamer acts as an ATP-dependent pump, pulling dsDNA into and through the RuvAB complex. HJ branch migration allows RuvC to scan DNA until it finds its consensus sequence, where it cleaves and resolves the cruciform DNA. The polypeptide is Holliday junction branch migration complex subunit RuvA (Synechococcus sp. (strain RCC307)).